A 385-amino-acid polypeptide reads, in one-letter code: 3-dehydroquinate synthase (385 aa).

NAD(+) is bound by residues 122 to 126, 146 to 147, K159, and K168; these read GVIGD and TT. Zn(2+) contacts are provided by E201, H264, and H282.

The protein belongs to the sugar phosphate cyclases superfamily. Dehydroquinate synthase family. Co(2+) is required as a cofactor. It depends on Zn(2+) as a cofactor. NAD(+) serves as cofactor.

The protein resides in the cytoplasm. The enzyme catalyses 7-phospho-2-dehydro-3-deoxy-D-arabino-heptonate = 3-dehydroquinate + phosphate. Its pathway is metabolic intermediate biosynthesis; chorismate biosynthesis; chorismate from D-erythrose 4-phosphate and phosphoenolpyruvate: step 2/7. In terms of biological role, catalyzes the conversion of 3-deoxy-D-arabino-heptulosonate 7-phosphate (DAHP) to dehydroquinate (DHQ). The chain is 3-dehydroquinate synthase from Rhodospirillum rubrum (strain ATCC 11170 / ATH 1.1.1 / DSM 467 / LMG 4362 / NCIMB 8255 / S1).